Consider the following 428-residue polypeptide: GTPase Obg (428 aa).

In terms of domain architecture, Obg spans 1-158 (MFVDQVKIYV…RDVILELKVL (158 aa)). In terms of domain architecture, OBG-type G spans 159–329 (ADVGLVGFPS…LLFEVANLIE (171 aa)). Residues 165 to 172 (GFPSVGKS), 190 to 194 (FTTIV), 212 to 215 (DLPG), 282 to 285 (NKMD), and 310 to 312 (SAV) each bind GTP. Residues Ser-172 and Thr-192 each coordinate Mg(2+). The OCT domain occupies 350-428 (KFDTEGVKFE…ILEYEFEFID (79 aa)).

Belongs to the TRAFAC class OBG-HflX-like GTPase superfamily. OBG GTPase family. As to quaternary structure, monomer. Mg(2+) serves as cofactor.

Its subcellular location is the cytoplasm. Its function is as follows. An essential GTPase which binds GTP, GDP and possibly (p)ppGpp with moderate affinity, with high nucleotide exchange rates and a fairly low GTP hydrolysis rate. Plays a role in control of the cell cycle, stress response, ribosome biogenesis and in those bacteria that undergo differentiation, in morphogenesis control. This Bacillus cereus (strain ATCC 14579 / DSM 31 / CCUG 7414 / JCM 2152 / NBRC 15305 / NCIMB 9373 / NCTC 2599 / NRRL B-3711) protein is GTPase Obg.